A 106-amino-acid chain; its full sequence is Nucleoid-associated protein DIP0260 (106 aa).

This sequence belongs to the YbaB/EbfC family. As to quaternary structure, homodimer.

Its subcellular location is the cytoplasm. It localises to the nucleoid. Its function is as follows. Binds to DNA and alters its conformation. May be involved in regulation of gene expression, nucleoid organization and DNA protection. The polypeptide is Nucleoid-associated protein DIP0260 (Corynebacterium diphtheriae (strain ATCC 700971 / NCTC 13129 / Biotype gravis)).